The primary structure comprises 510 residues: Histone deacetylase 3 (510 aa).

Positions 24–338 (RRVCYFYDPE…WCYETGVALG (315 aa)) are histone deacetylase. Catalysis depends on His158, which acts as the Proton donor/acceptor. 3 residues coordinate Zn(2+): Asp193, His195, and Asp281. Positions 394–510 (PSVQFQERIP…ARNEPGSSPK (117 aa)) are disordered. Composition is skewed to basic and acidic residues over residues 418-434 (DERH…DHKP) and 448-472 (VKRE…HKGP). Over residues 485 to 503 (APTADANAVAVNAPGNARN) the composition is skewed to low complexity.

Belongs to the histone deacetylase family. HD Type 1 subfamily. It depends on Zn(2+) as a cofactor. As to expression, expressed in roots.

It is found in the nucleus. The enzyme catalyses N(6)-acetyl-L-lysyl-[histone] + H2O = L-lysyl-[histone] + acetate. Its function is as follows. Responsible for the deacetylation of lysine residues on the N-terminal part of the core histones (H2A, H2B, H3 and H4). Histone deacetylation gives a tag for epigenetic repression and plays an important role in transcriptional regulation, cell cycle progression and developmental events. Histone deacetylases act via the formation of large multiprotein complexes. The polypeptide is Histone deacetylase 3 (Oryza sativa subsp. japonica (Rice)).